Consider the following 356-residue polypeptide: Arginine kinase 1 (356 aa).

Residues V6–G91 form the Phosphagen kinase N-terminal domain. G64 to Y68 contributes to the substrate binding site. A Phosphagen kinase C-terminal domain is found at Y119–L356. ATP is bound by residues S122 to R126 and H185. E225 lines the substrate pocket. R229 serves as a coordination point for ATP. Substrate is bound at residue C271. ATP contacts are provided by residues R280–H284 and R309–E314. E314 contributes to the substrate binding site.

It belongs to the ATP:guanido phosphotransferase family.

The enzyme catalyses L-arginine + ATP = N(omega)-phospho-L-arginine + ADP + H(+). The sequence is that of Arginine kinase 1 from Drosophila melanogaster (Fruit fly).